The sequence spans 300 residues: D-alanine--D-alanine ligase (300 aa).

Positions 99 to 293 (KKILKYANIN…FAELLNSIVK (195 aa)) constitute an ATP-grasp domain. 126–181 (IEKIGYPVFVKPNSGGSSVATNLVKDKEGIKEAVELALKYDKEVMIENYTKGEEIT) is an ATP binding site. The Mg(2+) site is built by Asp248, Glu260, and Asn262.

This sequence belongs to the D-alanine--D-alanine ligase family. Mg(2+) is required as a cofactor. Requires Mn(2+) as cofactor.

The protein resides in the cytoplasm. It carries out the reaction 2 D-alanine + ATP = D-alanyl-D-alanine + ADP + phosphate + H(+). Its pathway is cell wall biogenesis; peptidoglycan biosynthesis. Functionally, cell wall formation. The protein is D-alanine--D-alanine ligase of Clostridium botulinum (strain Langeland / NCTC 10281 / Type F).